The sequence spans 682 residues: E3 ubiquitin ligase Rnf157 (682 aa).

Residue Gly-2 is the site of N-myristoyl glycine attachment. The segment at 277 to 317 adopts an RING-type; degenerate zinc-finger fold; that stretch reads CVVCLSDVRDTLILPCRHCASCNVHCADTLRYQANNCPICR. The D-box 1 motif lies at 330 to 333; that stretch reads RKKL. Disordered regions lie at residues 440 to 604 and 655 to 682; these read QNSS…VQED and NTQR…PLAV. Residues 479 to 538 are compositionally biased toward polar residues; the sequence is ESENLTLSSSGAVDQSSCTGTPLSSTISSPEDPASSSLAQSVMSMASSQISTDTVSSMSG. The span at 585-597 shows a compositional bias: acidic residues; the sequence is QDAEGNDIMEEED. The D-box 2 motif lies at 658 to 661; it reads RRRL. 3 positions are modified to phosphoserine: Ser-662, Ser-664, and Ser-665.

Interacts with APBB1. Interacts with CHD1; CHD1-binding controls RNF157 stability. Also interacts with ATRN, MEGF8, TECR, MSI2, PLRG1, BYSL, MTERF3, PSMA1, MRPS18B, PRPF4, FASTKD2, SLC25A1, SMU1, CNOT9, MRPS2, MAGT1, FXR2, EMD, PSMD8, HDAC1, RAN, HSD17B12, TXNDC5 and MRPL19. Predominantly expressed in the brain.

The protein resides in the cytoplasm. The enzyme catalyses S-ubiquitinyl-[E2 ubiquitin-conjugating enzyme]-L-cysteine + [acceptor protein]-L-lysine = [E2 ubiquitin-conjugating enzyme]-L-cysteine + N(6)-ubiquitinyl-[acceptor protein]-L-lysine.. Its function is as follows. E3 ubiquitin ligase that ubiquitinates APBB1 for its degradation by the proteasome and thus prevents apoptosis and promotes survival of neurons. Has a dual role in neurons as it is also required for dendrite growth and maintenance for which its ligase activity is not critical. May act as a scaffold molecule to regulate this process. Acts as a downstream effector of the interconnected PI3K and MAPK signaling pathways and thus participates in the regulation of the cell cycle. This chain is E3 ubiquitin ligase Rnf157 (Rnf157), found in Rattus norvegicus (Rat).